A 713-amino-acid chain; its full sequence is Polyribonucleotide nucleotidyltransferase (713 aa).

2 residues coordinate Mg(2+): aspartate 493 and aspartate 499. The KH domain occupies 560 to 619 (PRMITIKINPEKIRDVIGKGGSVIRALTEETGTTIDISDDGVVTIASTNSEGMAEAKKRI). Residues 629 to 697 (GHVYEGTVLK…EKGRVRLSAK (69 aa)) form the S1 motif domain.

The protein belongs to the polyribonucleotide nucleotidyltransferase family. The cofactor is Mg(2+).

It is found in the cytoplasm. It carries out the reaction RNA(n+1) + phosphate = RNA(n) + a ribonucleoside 5'-diphosphate. In terms of biological role, involved in mRNA degradation. Catalyzes the phosphorolysis of single-stranded polyribonucleotides processively in the 3'- to 5'-direction. This chain is Polyribonucleotide nucleotidyltransferase, found in Burkholderia pseudomallei (strain 1106a).